Consider the following 77-residue polypeptide: MASKTVLVLLLVSVLVSTFCTAKAYPASLEDNFDLDALDDLDDLDLEDFYDLEPADLVLLDMWASMLENSDFEDDFE.

A signal peptide spans 1-24; it reads MASKTVLVLLLVSVLVSTFCTAKA.

The protein belongs to the non-disulfide-bridged peptide (NDBP) superfamily. Long chain multifunctional peptide (group 2) family. In terms of tissue distribution, expressed by the venom gland.

The protein resides in the secreted. The polypeptide is Anionic peptide 17.1 (Lychas mucronatus (Chinese swimming scorpion)).